A 295-amino-acid polypeptide reads, in one-letter code: Cop9 signalosome-interactor 1 (295 aa).

As to quaternary structure, component of a COP9 signalosome-like (CSN) complex, composed of RRI1/CSN5, CSN9, RRI2/CSN10, PCI8/CSN11, CSN12 and CSI1. In the complex, it probably interacts directly with CSN9 and CSN12. Interacts also with RPN5.

The protein localises to the cytoplasm. Its subcellular location is the nucleus. Its function is as follows. Component of the COP9 signalosome (CSN) complex that acts as an regulator of the ubiquitin (Ubl) conjugation pathway by mediating the deneddylation of the cullin subunit of SCF-type E3 ubiquitin-protein ligase complexes The CSN complex is involved in the regulation of the mating pheromone response. The sequence is that of Cop9 signalosome-interactor 1 (CSI1) from Saccharomyces cerevisiae (strain ATCC 204508 / S288c) (Baker's yeast).